Here is a 369-residue protein sequence, read N- to C-terminus: Actin-related protein T3 (369 aa).

The protein belongs to the actin family. As to quaternary structure, interacts with PFN3. Testis specific (at protein level). Expressed specifically in haploid germ cells.

Its subcellular location is the cytoplasm. The protein localises to the cytoskeleton. It is found in the nucleus. The chain is Actin-related protein T3 (Actrt3) from Mus musculus (Mouse).